The sequence spans 216 residues: Large ribosomal subunit protein uL3 (216 aa).

Residues 134–153 (RATHGNSRSHNVPGSIGMAQ) form a disordered region. An N5-methylglutamine modification is found at Gln153.

Belongs to the universal ribosomal protein uL3 family. As to quaternary structure, part of the 50S ribosomal subunit. Forms a cluster with proteins L14 and L19. In terms of processing, methylated by PrmB.

Its function is as follows. One of the primary rRNA binding proteins, it binds directly near the 3'-end of the 23S rRNA, where it nucleates assembly of the 50S subunit. The chain is Large ribosomal subunit protein uL3 from Cupriavidus taiwanensis (strain DSM 17343 / BCRC 17206 / CCUG 44338 / CIP 107171 / LMG 19424 / R1) (Ralstonia taiwanensis (strain LMG 19424)).